The sequence spans 437 residues: Neomycin resistance protein (437 aa).

2 disordered regions span residues 161-285 and 305-338; these read GQRG…EEEA and VSGA…PVPD. The span at 203–229 shows a compositional bias: low complexity; it reads PPTGARSPGATAGARATASTSSSSVRS. Basic residues predominate over residues 324 to 338; sequence RRRHRGRRHGRPVPD.

It belongs to the Gram-positive plasmids replication protein type 1 family.

This Streptomyces cyanogenus protein is Neomycin resistance protein.